The following is a 1704-amino-acid chain: Type-2 histone deacetylase 2 (1704 aa).

3 disordered regions span residues 1–303, 315–383, and 540–634; these read MSTN…SEER, TQGS…TSKK, and QFLQ…IGNS. The segment covering 15 to 69 has biased composition (low complexity); sequence TTITNESNTDNNNNNNDDNKNNTENTTSPTNNNNTNDNDNNSDNNNNKNNNNNNS. A compositionally biased stretch (polar residues) spans 70 to 81; the sequence is QVTEEQQVTLED. A compositionally biased stretch (acidic residues) spans 97 to 113; the sequence is DSAEEDEDEMEDDDEDA. Over residues 134 to 153 the composition is skewed to polar residues; it reads KVQQSTNTHLSQTTPESPTI. The segment covering 165–176 has biased composition (low complexity); the sequence is STSTNNTPNTQS. The segment covering 186–195 has biased composition (basic and acidic residues); it reads LTSDEEKDLM. Positions 196–210 are enriched in acidic residues; the sequence is LSEESDGGVGEDDDS. Residues 222–286 are compositionally biased toward low complexity; the sequence is NQSNQNQNNN…SNNDNNNNNN (65 aa). The segment covering 315 to 325 has biased composition (polar residues); that stretch reads TQGSSTTTSDP. Residues 326-351 are compositionally biased toward low complexity; the sequence is NNQNNQINQINQNNQNNQNNQNNQNN. The segment covering 354-369 has biased composition (acidic residues); the sequence is GEEEFGEEFEEEEEDM. Residues 372 to 382 are compositionally biased toward basic residues; the sequence is PKKKTKYKTSK. 2 stretches are compositionally biased toward low complexity: residues 540–549 and 561–580; these read QFLQQQQQQQ and NSNNSNNNNNNNSNNNNNNS. Basic and acidic residues predominate over residues 608 to 620; it reads YETRKYTKKRNDE. Residues Asp-1165 and Gly-1227 each coordinate substrate. A divalent metal cation is bound by residues Asp-1256, His-1258, and Asp-1350. The disordered stretch occupies residues 1485–1704; that stretch reads QLERQKQLQQ…TPQNINNSDN (220 aa). Residues 1491–1616 are compositionally biased toward low complexity; the sequence is QLQQQQQQAQ…NNSNNNNNMN (126 aa). Positions 1649–1669 are enriched in polar residues; sequence LSPNSVNRGNNPSNISMSGAQ. Over residues 1677–1698 the composition is skewed to low complexity; it reads SPKPSNSPNSPSTSNNNGTPQN.

Belongs to the histone deacetylase family. HD type 2 subfamily.

It is found in the nucleus. It localises to the cytoplasm. The enzyme catalyses N(6)-acetyl-L-lysyl-[histone] + H2O = L-lysyl-[histone] + acetate. Responsible for the deacetylation of lysine residues on the N-terminal part of the core histones (H2A, H2B, H3 and H4). Histone deacetylation plays an important role in transcriptional regulation, cell cycle progression and developmental events. Histone deacetylases act via the formation of large multiprotein complexes. This Dictyostelium discoideum (Social amoeba) protein is Type-2 histone deacetylase 2 (hdaC).